A 383-amino-acid polypeptide reads, in one-letter code: G-protein coupled receptor E1 (383 aa).

9 consecutive transmembrane segments (helical) span residues 13 to 35, 78 to 98, 109 to 129, 160 to 180, 190 to 210, 242 to 262, 279 to 299, 323 to 343, and 351 to 371; these read SSLATTMTTNFTSLLTSVVTTIA, LYLLVFLFGLLGNILVVIIVI, MLLLNLAISDLLFLLTLPFWM, VFCIILLTVDRYLAVVYAVTA, IVTCVCTWFLAGLLSLPEFFF, VIMLSLILPLLIMAVCYYVII, LIFVIMVAYFVFWTPYNIVLL, LITKTVAYTHCCINPVIYAFV, and LYHFFHTYVAIYLCKYIPFLS. An intrachain disulfide couples Cys145 to Cys222.

The protein belongs to the G-protein coupled receptor 1 family.

The protein localises to the host membrane. The sequence is that of G-protein coupled receptor E1 (E1) from Equine herpesvirus 2 (strain 86/87) (EHV-2).